We begin with the raw amino-acid sequence, 391 residues long: Serpin B13 (391 aa).

It belongs to the serpin family. Ov-serpin subfamily. Skin specific.

It is found in the cytoplasm. In terms of biological role, may play a role in the proliferation or differentiation of keratinocytes. This is Serpin B13 (SERPINB13) from Homo sapiens (Human).